The chain runs to 603 residues: Serine/threonine-protein kinase PLK1 (603 aa).

The span at 1–15 (MNAAAKAGKLARAPA) shows a compositional bias: low complexity. The disordered stretch occupies residues 1–32 (MNAAAKAGKLARAPADLGKGGVPGDAAPGAPG). K19 participates in a covalent cross-link: Glycyl lysine isopeptide (Lys-Gly) (interchain with G-Cter in ubiquitin). The Protein kinase domain maps to 53 to 305 (YVRGRFLGKG…IHELLNDEFF (253 aa)). ATP is bound by residues 59–67 (LGKGGFAKC) and K82. S103 bears the Phosphoserine mark. E131 is an ATP binding site. Phosphoserine is present on S137. The active-site Proton acceptor is the D176. ATP-binding positions include 178-181 (KLGN) and D194. The interval 194–221 (DFGLATKVEYEGERKKTLCGTPNYIAPE) is activation loop. T210 bears the Phosphothreonine; by AURKA mark. T214 is modified (phosphothreonine). Residues S269 and S335 each carry the phosphoserine; by autocatalysis modification. Residues 337 to 340 (RKPL) carry the D-box that targets the protein for proteasomal degradation in anaphase motif. A Glycyl lysine isopeptide (Lys-Gly) (interchain with G-Cter in SUMO2) cross-link involves residue K338. The tract at residues 338–361 (KPLTVLNKGVENPLPDRPREKEEP) is disordered. Over residues 351-361 (LPDRPREKEEP) the composition is skewed to basic and acidic residues. 2 positions are modified to phosphoserine: S375 and S450. A POLO box 1 domain is found at 410-488 (WVSKWVDYSD…LNYFRNYMSE (79 aa)). Residue K492 forms a Glycyl lysine isopeptide (Lys-Gly) (interchain with G-Cter in ubiquitin) linkage. Residues 493-507 (AGANITPREGDELAR) are linker. T498 is subject to Phosphothreonine. One can recognise a POLO box 2 domain in the interval 510 to 592 (YLRTWFRTRS…ARTMVDKLLS (83 aa)). The important for interaction with phosphorylated proteins stretch occupies residues 538–540 (HTK).

This sequence belongs to the protein kinase superfamily. Ser/Thr protein kinase family. CDC5/Polo subfamily. Interacts with CEP170 and EVI5. Interacts and phosphorylates ERCC6L. Interacts with FAM29A. Interacts with SLX4/BTBD12 and TTDN1. Interacts with BUB1B. Interacts (via POLO-box domain) with the phosphorylated form of BUB1, CENPU and CDC25C. Interacts with isoform 3 of SGO1. Interacts with BORA, KIF2A and AURKA. Interacts with TOPORS and CYLD. Interacts with ECT2; the interaction is stimulated upon phosphorylation of ECT2 on 'Thr-444'. Interacts with PRC1. Interacts with KIF20A/MKLP2 (when phosphorylated), leading to the recruitment at the central spindle. Interacts (via POLO box domains) with PPP1R12A/MYPT1 (when previously phosphorylated by CDK1). Part of an astrin (SPAG5)-kinastrin (SKAP) complex containing KNSTRN, SPAG5, PLK1, DYNLL1 and SGO2. Interacts with BIRC6/bruce. Interacts with CDK1-phosphorylated FRY; this interaction occurs in mitotic cells, but not in interphase cells. FRY interaction facilitates AURKA-mediated PLK1 phosphorylation. Interacts with CDK1-phosphorylated DCTN6 during mitotic prometaphase; the interaction facilitates recruitment to kinetochores. Interacts with CEP68; the interaction phosphorylates CEP68. Interacts (via POLO-box domain) with DCTN1. Interacts with CEP20 in later G1, S, G2 and M phases of the cell cycle; this interaction recruits PLK1 to centrosomes, a step required for S phase progression. Interacts with HSF1; this interaction increases upon heat shock but does not modulate neither HSF1 homotrimerization nor DNA-binding activities. Interacts with HNRNPU; this interaction induces phosphorylation of HNRNPU in mitosis. Interacts (via its N-terminus) with RIOK2. Interacts with KLHL22. Interacts (via POLO box domains) with NEDD9/HEF1 (via C-terminus). Interacts (via RVxF motif) with FIRRM; regulates PLK1 kinase activity. Interacts with SKA3; the interaction promotes the stability of PLK1. Interacts with the MTMR3:MTMR4 heterooligomer; brings CEP55 and PLK1 together during early mitosis, regulating the phosphorylation of CEP55 by PLK1 and its recruitment to the midbody where it can mediate cell abscission. In terms of processing, catalytic activity is enhanced by phosphorylation of Thr-210. Phosphorylation at Thr-210 is first detected on centrosomes in the G2 phase of the cell cycle, peaks in prometaphase and gradually disappears from centrosomes during anaphase. Dephosphorylation at Thr-210 at centrosomes is probably mediated by protein phosphatase 1C (PP1C), via interaction with PPP1R12A/MYPT1. Autophosphorylation and phosphorylation of Ser-137 may not be significant for the activation of PLK1 during mitosis, but may enhance catalytic activity during recovery after DNA damage checkpoint. Phosphorylated in vitro by STK10. Ubiquitinated by the anaphase promoting complex/cyclosome (APC/C) in anaphase and following DNA damage, leading to its degradation by the proteasome. Ubiquitination is mediated via its interaction with FZR1/CDH1. Ubiquitination and subsequent degradation prevents entry into mitosis and is essential to maintain an efficient G2 DNA damage checkpoint. Monoubiquitination at Lys-492 by the BCR(KLHL22) ubiquitin ligase complex does not lead to degradation: it promotes PLK1 dissociation from phosphoreceptor proteins and subsequent removal from kinetochores, allowing silencing of the spindle assembly checkpoint (SAC) and chromosome segregation.

It localises to the nucleus. Its subcellular location is the chromosome. The protein resides in the centromere. It is found in the kinetochore. The protein localises to the cytoplasm. It localises to the cytoskeleton. Its subcellular location is the microtubule organizing center. The protein resides in the centrosome. It is found in the spindle. The protein localises to the midbody. It carries out the reaction L-seryl-[protein] + ATP = O-phospho-L-seryl-[protein] + ADP + H(+). It catalyses the reaction L-threonyl-[protein] + ATP = O-phospho-L-threonyl-[protein] + ADP + H(+). Its activity is regulated as follows. Activated by phosphorylation of Thr-210 by AURKA; phosphorylation by AURKA is enhanced by BORA. Once activated, activity is stimulated by binding target proteins. Binding of target proteins has no effect on the non-activated kinase. Several inhibitors targeting PLKs are currently in development and are under investigation in a growing number of clinical trials, such as BI 2536, an ATP-competitive PLK1 inhibitor or BI 6727, a dihydropteridinone that specifically inhibits the catalytic activity of PLK1. Functionally, serine/threonine-protein kinase that performs several important functions throughout M phase of the cell cycle, including the regulation of centrosome maturation and spindle assembly, the removal of cohesins from chromosome arms, the inactivation of anaphase-promoting complex/cyclosome (APC/C) inhibitors, and the regulation of mitotic exit and cytokinesis. Polo-like kinase proteins act by binding and phosphorylating proteins that are already phosphorylated on a specific motif recognized by the POLO box domains. Phosphorylates BORA, BUB1B/BUBR1, CCNB1, CDC25C, CEP55, ECT2, ERCC6L, FBXO5/EMI1, FOXM1, KIF20A/MKLP2, CENPU, NEDD1, NINL, NPM1, NUDC, PKMYT1/MYT1, KIZ, PPP1R12A/MYPT1, PRC1, RACGAP1/CYK4, RHNO1, SGO1, STAG2/SA2, TEX14, TOPORS, p73/TP73, TPT1, WEE1 and HNRNPU. Plays a key role in centrosome functions and the assembly of bipolar spindles by phosphorylating KIZ, NEDD1 and NINL. NEDD1 phosphorylation promotes subsequent targeting of the gamma-tubulin ring complex (gTuRC) to the centrosome, an important step for spindle formation. Phosphorylation of NINL component of the centrosome leads to NINL dissociation from other centrosomal proteins. Involved in mitosis exit and cytokinesis by phosphorylating CEP55, ECT2, KIF20A/MKLP2, CENPU, PRC1 and RACGAP1. Recruited at the central spindle by phosphorylating and docking PRC1 and KIF20A/MKLP2; creates its own docking sites on PRC1 and KIF20A/MKLP2 by mediating phosphorylation of sites subsequently recognized by the POLO box domains. Phosphorylates RACGAP1, thereby creating a docking site for the Rho GTP exchange factor ECT2 that is essential for the cleavage furrow formation. Promotes the central spindle recruitment of ECT2. Plays a central role in G2/M transition of mitotic cell cycle by phosphorylating CCNB1, CDC25C, FOXM1, CENPU, PKMYT1/MYT1, PPP1R12A/MYPT1 and WEE1. Part of a regulatory circuit that promotes the activation of CDK1 by phosphorylating the positive regulator CDC25C and inhibiting the negative regulators WEE1 and PKMYT1/MYT1. Also acts by mediating phosphorylation of cyclin-B1 (CCNB1) on centrosomes in prophase. Phosphorylates FOXM1, a key mitotic transcription regulator, leading to enhance FOXM1 transcriptional activity. Involved in kinetochore functions and sister chromatid cohesion by phosphorylating BUB1B/BUBR1, FBXO5/EMI1 and STAG2/SA2. PLK1 is high on non-attached kinetochores suggesting a role of PLK1 in kinetochore attachment or in spindle assembly checkpoint (SAC) regulation. Required for kinetochore localization of BUB1B. Regulates the dissociation of cohesin from chromosomes by phosphorylating cohesin subunits such as STAG2/SA2. Phosphorylates SGO1: required for spindle pole localization of isoform 3 of SGO1 and plays a role in regulating its centriole cohesion function. Mediates phosphorylation of FBXO5/EMI1, a negative regulator of the APC/C complex during prophase, leading to FBXO5/EMI1 ubiquitination and degradation by the proteasome. Acts as a negative regulator of p53 family members: phosphorylates TOPORS, leading to inhibit the sumoylation of p53/TP53 and simultaneously enhance the ubiquitination and subsequent degradation of p53/TP53. Phosphorylates the transactivation domain of the transcription factor p73/TP73, leading to inhibit p73/TP73-mediated transcriptional activation and pro-apoptotic functions. Phosphorylates BORA, and thereby promotes the degradation of BORA. Contributes to the regulation of AURKA function. Also required for recovery after DNA damage checkpoint and entry into mitosis. Phosphorylates MISP, leading to stabilization of cortical and astral microtubule attachments required for proper spindle positioning. Together with MEIKIN, acts as a regulator of kinetochore function during meiosis I: required both for mono-orientation of kinetochores on sister chromosomes and protection of centromeric cohesin from separase-mediated cleavage. Phosphorylates CEP68 and is required for its degradation. Regulates nuclear envelope breakdown during prophase by phosphorylating DCTN1 resulting in its localization in the nuclear envelope. Phosphorylates the heat shock transcription factor HSF1, promoting HSF1 nuclear translocation upon heat shock. Phosphorylates HSF1 also in the early mitotic period; this phosphorylation regulates HSF1 localization to the spindle pole, the recruitment of the SCF(BTRC) ubiquitin ligase complex induicing HSF1 degradation, and hence mitotic progression. Regulates mitotic progression by phosphorylating RIOK2. Through the phosphorylation of DZIP1 regulates the localization during mitosis of the BBSome, a ciliary protein complex involved in cilium biogenesis. Regulates DNA repair during mitosis by mediating phosphorylation of POLQ and RHNO1, thereby promoting POLQ recruitment to DNA damage sites. Phosphorylates ATXN10 which may play a role in the regulation of cytokinesis and may stimulate the proteasome-mediated degradation of ATXN10. This is Serine/threonine-protein kinase PLK1 (Plk1) from Rattus norvegicus (Rat).